We begin with the raw amino-acid sequence, 150 residues long: Transcriptional regulator MraZ (150 aa).

2 SpoVT-AbrB domains span residues 11 to 53 (TYTP…PFDE) and 82 to 125 (AVDQ…NKDT).

It belongs to the MraZ family. In terms of assembly, forms oligomers.

It is found in the cytoplasm. The protein resides in the nucleoid. This Bifidobacterium longum (strain NCC 2705) protein is Transcriptional regulator MraZ.